Here is a 426-residue protein sequence, read N- to C-terminus: Dihydroorotase (426 aa).

The Zn(2+) site is built by His-58 and His-60. Substrate contacts are provided by residues 60–62 and Asn-92; that span reads HLR. 3 residues coordinate Zn(2+): Asp-150, His-177, and His-230. Position 276 (Asn-276) interacts with substrate. Position 303 (Asp-303) interacts with Zn(2+). Asp-303 is a catalytic residue. Substrate contacts are provided by residues His-307 and 321 to 322; that span reads FG.

This sequence belongs to the metallo-dependent hydrolases superfamily. DHOase family. Class I DHOase subfamily. Requires Zn(2+) as cofactor.

The enzyme catalyses (S)-dihydroorotate + H2O = N-carbamoyl-L-aspartate + H(+). It participates in pyrimidine metabolism; UMP biosynthesis via de novo pathway; (S)-dihydroorotate from bicarbonate: step 3/3. Its function is as follows. Catalyzes the reversible cyclization of carbamoyl aspartate to dihydroorotate. The chain is Dihydroorotase from Listeria monocytogenes serotype 4b (strain F2365).